A 472-amino-acid chain; its full sequence is FAD-dependent monooxygenase ltmM (472 aa).

Residues 7 to 27 (VIIVGGSVAGLSLAHCLEKIG) traverse the membrane as a helical segment. Glu34, Gly48, and Arg107 together coordinate FAD. A glycan (N-linked (GlcNAc...) asparagine) is linked at Asn186. FAD-binding residues include Asp306 and Ala319. The chain crosses the membrane as a helical span at residues 450 to 470 (IVYALYLVAAAAFILYCLSSL).

This sequence belongs to the paxM FAD-dependent monooxygenase family. FAD is required as a cofactor.

The protein localises to the membrane. Its pathway is secondary metabolite biosynthesis. Its function is as follows. FAD-dependent monooxygenase; part of the gene cluster that mediates the biosynthesis of lolitrems, indole-diterpene mycotoxins that are potent tremorgens in mammals, and are synthesized by clavicipitaceous fungal endophytes in association with their grass hosts. The geranylgeranyl diphosphate (GGPP) synthase ltmG is proposed to catalyze the first step in lolitremB biosynthesis. LtmG catalyzes a series of iterative condensations of isopentenyl diphosphate (IPP) with dimethylallyl diphosphate (DMAPP), geranyl diphosphate (GPP), and farnesyl diphosphate (FPP), to form GGPP. GGPP then condenses with indole-3-glycerol phosphate to form 3-geranylgeranylindole, an acyclic intermediate, to be incorporated into paxilline. Either ltmG or ltmC could be responsible for this step, as both are putative prenyl transferases. The FAD-dependent monooxygenase ltmM then catalyzes the epoxidation of the two terminal alkenes of the geranylgeranyl moiety, which is subsequently cyclized by ltmB, to paspaline. The cytochrome P450 monooxygenases ltmQ and ltmP can sequentially oxidize paspaline to terpendole E and terpendole F. Alternatively, ltmP converts paspaline to an intermediate which is oxidized by ltmQ to terpendole F. LtmF, ltmK, ltmE and ltmJ appear to be unique to the epichloe endophytes. The prenyltransferase ltmF is involved in the 27-hydroxyl-O-prenylation. The cytochrome P450 monooxygenase ltmK is required for the oxidative acetal ring formation. The multi-functional prenyltransferase ltmE is required for C20- and C21-prenylations of the indole ring of paspalanes and acts together with the cytochrome P450 monooxygenase ltmJ to yield lolitremanes by multiple oxidations and ring closures. The stereoisomer pairs of lolitriol and lolitrem N or lolitrem B and lolitrem F may be attributed to variations in the way in which ring closure can occur under the action of ltmJ. While the major product of this pathway is lolitrem B, the prenyl transferases and cytochrome P450 monooxygenases identified in this pathway have a remarkable versatility in their regio- and stereo-specificities to generate a diverse range of metabolites that are products of a metabolic grid rather than a linear pathway. This is FAD-dependent monooxygenase ltmM (ltmM) from Epichloe festucae var. lolii (Neotyphodium lolii).